The chain runs to 94 residues: Phosphoribosyl-ATP pyrophosphatase (94 aa).

It belongs to the PRA-PH family.

The protein resides in the cytoplasm. It carries out the reaction 1-(5-phospho-beta-D-ribosyl)-ATP + H2O = 1-(5-phospho-beta-D-ribosyl)-5'-AMP + diphosphate + H(+). Its pathway is amino-acid biosynthesis; L-histidine biosynthesis; L-histidine from 5-phospho-alpha-D-ribose 1-diphosphate: step 2/9. This chain is Phosphoribosyl-ATP pyrophosphatase, found in Pyrobaculum calidifontis (strain DSM 21063 / JCM 11548 / VA1).